A 209-amino-acid polypeptide reads, in one-letter code: Outer-membrane lipoprotein LolB (209 aa).

An N-terminal signal peptide occupies residues 1-21; that stretch reads MNNMKTFKFLTALFATAILTA. Cysteine 22 is lipidated: N-palmitoyl cysteine. A lipid anchor (S-diacylglycerol cysteine) is attached at cysteine 22.

It belongs to the LolB family. As to quaternary structure, monomer.

It localises to the cell outer membrane. Its function is as follows. Plays a critical role in the incorporation of lipoproteins in the outer membrane after they are released by the LolA protein. The sequence is that of Outer-membrane lipoprotein LolB from Haemophilus influenzae (strain 86-028NP).